The chain runs to 391 residues: MNIHEYQGKDILRKFGVSVPKGIVAFSPAEARQAAEQLFEEQESNVVVVKAQIHAGGRGKAGGVKLAQSPEEAYEIAGQILGATLVTHQTGPEGKEVRRLLVEEGMNIEKEFYVGITLDRATSNNVLMVSTEGGMEIEKVAEETPDKILKIQIDPLHGLLGFQARQAAFFLELDGERFKNGVKFITALYNAYVSIDASLAEINPLVVTAEGRVLALDAKINFDSNALYRHKDFLELRDTGEEDPFEVEASKSNLNYVRLDGNVGCMVNGAGLAMGTMDMIQLAGGKPANFLDVGGTASPETVTEGFKIIMSDKNVKAILVNIFGGIVRCDRVAAGVIEAAKKVGLNLPVIVRLEGTNAEAAQTMLDESGLNLISANGLRDAAEKINEALAG.

The ATP-grasp domain maps to 9 to 248; it reads KDILRKFGVS…TGEEDPFEVE (240 aa). ATP contacts are provided by residues Lys-50, 57–59, Glu-103, Met-106, and Glu-111; that span reads GRG. Mg(2+) is bound by residues Asn-203 and Asp-217. Residues Asn-268 and 325 to 327 contribute to the substrate site; that span reads GIV.

Belongs to the succinate/malate CoA ligase beta subunit family. In terms of assembly, heterotetramer of two alpha and two beta subunits. Mg(2+) is required as a cofactor.

It carries out the reaction succinate + ATP + CoA = succinyl-CoA + ADP + phosphate. It catalyses the reaction GTP + succinate + CoA = succinyl-CoA + GDP + phosphate. The protein operates within carbohydrate metabolism; tricarboxylic acid cycle; succinate from succinyl-CoA (ligase route): step 1/1. Succinyl-CoA synthetase functions in the citric acid cycle (TCA), coupling the hydrolysis of succinyl-CoA to the synthesis of either ATP or GTP and thus represents the only step of substrate-level phosphorylation in the TCA. The beta subunit provides nucleotide specificity of the enzyme and binds the substrate succinate, while the binding sites for coenzyme A and phosphate are found in the alpha subunit. The protein is Succinate--CoA ligase [ADP-forming] subunit beta of Chlorobium phaeobacteroides (strain BS1).